Here is a 406-residue protein sequence, read N- to C-terminus: Phosphorylase b kinase gamma catalytic chain, liver/testis isoform (406 aa).

The Protein kinase domain maps to 24 to 291 (YDPKDIIGRG…AEQALQHPFF (268 aa)). Residues 30–38 (IGRGVSSVV) and Lys-53 each bind ATP. Residue Asp-153 is the Proton acceptor of the active site. The tract at residues 306–330 (QRFRVAVWTILAAGRVALSSHRLRP) is calmodulin-binding (domain-N). The calmodulin-binding (domain-C) stretch occupies residues 346 to 370 (VRRLIDNCAFRLYGHWVKKGEQQNR).

The protein belongs to the protein kinase superfamily. CAMK Ser/Thr protein kinase family. Hexadecamer of 4 heterotetramers, each composed of alpha, beta, gamma, and delta subunits. Alpha (PHKA1 or PHKA2) and beta (PHKB) are regulatory subunits, gamma (PHKG1 or PHKG2) is the catalytic subunit, and delta is calmodulin.

It catalyses the reaction 2 ATP + phosphorylase b = 2 ADP + phosphorylase a.. In terms of biological role, catalytic subunit of the phosphorylase b kinase (PHK), which mediates the neural and hormonal regulation of glycogen breakdown (glycogenolysis) by phosphorylating and thereby activating glycogen phosphorylase. May regulate glycogeneolysis in the testis. In vitro, phosphorylates PYGM. The chain is Phosphorylase b kinase gamma catalytic chain, liver/testis isoform (Phkg2) from Rattus norvegicus (Rat).